The sequence spans 235 residues: Eukaryotic translation initiation factor 4E-1 (235 aa).

The tract at residues Met-1 to Glu-36 is disordered. Polar residues predominate over residues Lys-8–Pro-24. 2 EIF4G-binding regions span residues His-60–Glu-63 and Phe-70–His-106. MRNA contacts are provided by residues Lys-78–Gly-83, Lys-110, and Trp-128–Glu-129. An intrachain disulfide couples Cys-133 to Cys-171. Residues Tyr-154 to Gln-163 form an EIF4G-binding region. MRNA-binding positions include Arg-178–Lys-183 and Lys-223–Arg-227.

Belongs to the eukaryotic initiation factor 4E family. As to quaternary structure, EIF4F is a multi-subunit complex, the composition of which varies with external and internal environmental conditions. It is composed of at least EIF4A, EIF4E and EIF4G. EIF4E is also known to interact with other partners. In higher plants two isoforms of EIF4F have been identified, named isoform EIF4F and isoform EIF(iso)4F. Isoform EIF4F has subunits p220 and p26, whereas isoform EIF(iso)4F has subunits p82 and p28. (Microbial infection) Interacts with potyvirus viral genome-linked protein (VPg); this interaction is possible in susceptible hosts but impaired in resistant plants. In terms of processing, according to the redox status, the Cys-133-Cys-171 disulfide bridge may have a role in regulating protein function by affecting its ability to bind capped mRNA.

The protein resides in the nucleus. Its subcellular location is the cytoplasm. Functionally, component of the protein complex eIF4F, which is involved in the recognition of the mRNA cap, ATP-dependent unwinding of 5'-terminal secondary structure and recruitment of mRNA to the ribosome. Recognizes and binds the 7-methylguanosine-containing mRNA cap during an early step in the initiation of protein synthesis and facilitates ribosome binding by inducing the unwinding of the mRNAs secondary structures. Key component of recessive resistance to potyviruses. (Microbial infection) Susceptibility host factor required for viral infection by recruiting viral RNAs to the host ribosomal complex via an interaction with viral genome-linked protein (VPg). The protein is Eukaryotic translation initiation factor 4E-1 of Citrullus lanatus (Watermelon).